A 626-amino-acid chain; its full sequence is Probable potassium transport system protein Kup 3 (626 aa).

Helical transmembrane passes span 10-30, 51-71, 107-127, 141-161, 173-193, 216-236, 251-271, 293-313, 341-361, 371-391, 401-421, and 423-443; these read LATLTLAALGVVYGDIGTSPL, VLGILSLFFWSLIIVVTLKYV, VLLGLFGAALFYGDGIITPAI, PAFKPYILPITLITLIGLFIF, FGPVMVIWFAVIAVLGAAAIV, LLGFFALGAVVLCITGGEALY, WLGYVLPALLLNYFGQGALLL, LVALATVATVIASQAVISGAF, IYLPAINWMMLIAIIALVIEF, YGIAVTGTMLITNILAIAVAV, AMLGALPFICIDLGFFLANSV, and IADGGWFPLAFGLAVFILLTT.

Belongs to the HAK/KUP transporter (TC 2.A.72) family.

The protein localises to the cell inner membrane. It catalyses the reaction K(+)(in) + H(+)(in) = K(+)(out) + H(+)(out). Transport of potassium into the cell. Likely operates as a K(+):H(+) symporter. The polypeptide is Probable potassium transport system protein Kup 3 (Dechloromonas aromatica (strain RCB)).